A 239-amino-acid polypeptide reads, in one-letter code: Probable transcriptional regulatory protein CD630_07950 (239 aa).

This sequence belongs to the TACO1 family.

It localises to the cytoplasm. The sequence is that of Probable transcriptional regulatory protein CD630_07950 from Clostridioides difficile (strain 630) (Peptoclostridium difficile).